Reading from the N-terminus, the 352-residue chain is UDP-N-acetylglucosamine--N-acetylmuramyl-(pentapeptide) pyrophosphoryl-undecaprenol N-acetylglucosamine transferase (352 aa).

S195 and Q287 together coordinate UDP-N-acetyl-alpha-D-glucosamine.

This sequence belongs to the glycosyltransferase 28 family. MurG subfamily.

It localises to the cell membrane. The enzyme catalyses Mur2Ac(oyl-L-Ala-gamma-D-Glu-L-Lys-D-Ala-D-Ala)-di-trans,octa-cis-undecaprenyl diphosphate + UDP-N-acetyl-alpha-D-glucosamine = beta-D-GlcNAc-(1-&gt;4)-Mur2Ac(oyl-L-Ala-gamma-D-Glu-L-Lys-D-Ala-D-Ala)-di-trans,octa-cis-undecaprenyl diphosphate + UDP + H(+). The protein operates within cell wall biogenesis; peptidoglycan biosynthesis. In terms of biological role, cell wall formation. Catalyzes the transfer of a GlcNAc subunit on undecaprenyl-pyrophosphoryl-MurNAc-pentapeptide (lipid intermediate I) to form undecaprenyl-pyrophosphoryl-MurNAc-(pentapeptide)GlcNAc (lipid intermediate II). The sequence is that of UDP-N-acetylglucosamine--N-acetylmuramyl-(pentapeptide) pyrophosphoryl-undecaprenol N-acetylglucosamine transferase from Streptococcus pneumoniae serotype 19F (strain G54).